The sequence spans 160 residues: SsrA-binding protein (160 aa).

It belongs to the SmpB family.

Its subcellular location is the cytoplasm. Required for rescue of stalled ribosomes mediated by trans-translation. Binds to transfer-messenger RNA (tmRNA), required for stable association of tmRNA with ribosomes. tmRNA and SmpB together mimic tRNA shape, replacing the anticodon stem-loop with SmpB. tmRNA is encoded by the ssrA gene; the 2 termini fold to resemble tRNA(Ala) and it encodes a 'tag peptide', a short internal open reading frame. During trans-translation Ala-aminoacylated tmRNA acts like a tRNA, entering the A-site of stalled ribosomes, displacing the stalled mRNA. The ribosome then switches to translate the ORF on the tmRNA; the nascent peptide is terminated with the 'tag peptide' encoded by the tmRNA and targeted for degradation. The ribosome is freed to recommence translation, which seems to be the essential function of trans-translation. This is SsrA-binding protein from Yersinia enterocolitica serotype O:8 / biotype 1B (strain NCTC 13174 / 8081).